A 223-amino-acid chain; its full sequence is Icarapin (223 aa).

An N-terminal signal peptide occupies residues 1–19 (MKTLGVLFIAAWFIACTHS). Asparagine 126, asparagine 142, asparagine 168, and asparagine 193 each carry an N-linked (GlcNAc...) asparagine glycan. Polar residues predominate over residues 186-203 (LPTLIGKNETSTQSSRSV). Residues 186 to 223 (LPTLIGKNETSTQSSRSVESVEDFDNEIPKNQGDVLTA) form a disordered region.

Expressed by the venom duct.

The protein localises to the secreted. The sequence is that of Icarapin from Apis mellifera carnica (Carniolan honeybee).